The sequence spans 277 residues: Sulfur carrier protein FdhD (277 aa).

The active-site Cysteine persulfide intermediate is the Cys-123.

The protein belongs to the FdhD family.

The protein resides in the cytoplasm. Its function is as follows. Required for formate dehydrogenase (FDH) activity. Acts as a sulfur carrier protein that transfers sulfur from IscS to the molybdenum cofactor prior to its insertion into FDH. The polypeptide is Sulfur carrier protein FdhD (Pectobacterium atrosepticum (strain SCRI 1043 / ATCC BAA-672) (Erwinia carotovora subsp. atroseptica)).